A 1022-amino-acid polypeptide reads, in one-letter code: Mismatch repair endonuclease pms1 (1022 aa).

3 disordered regions span residues 251 to 282, 390 to 527, and 622 to 676; these read TGQS…SQSS, FNDE…EDED, and KMKQ…IDGY. Positions 403 to 412 are enriched in polar residues; it reads KQSKISSFPN. 2 stretches are compositionally biased toward low complexity: residues 436–469 and 647–664; these read TTTT…NNRN and QKQQ…QQQQ.

The protein belongs to the DNA mismatch repair MutL/HexB family. Heterodimer of pms1 and mlh1 (MutL alpha). Forms a ternary complex with MutS alpha (msh2-msh6) or MutS beta (msh2-msh3).

The protein localises to the nucleus. Component of the post-replicative DNA mismatch repair system (MMR). Heterodimerizes with mlh1 to form MutL alpha. DNA repair is initiated by MutS alpha (msh2-msh6) or MutS beta (msh2-msh3) binding to a dsDNA mismatch, then MutL alpha is recruited to the heteroduplex. Assembly of the MutL-MutS-heteroduplex ternary complex in presence of rfc and pcna is sufficient to activate endonuclease activity of pms1. It introduces single-strand breaks near the mismatch and thus generates new entry points for the exonuclease exo1 to degrade the strand containing the mismatch. The polypeptide is Mismatch repair endonuclease pms1 (pms1) (Dictyostelium discoideum (Social amoeba)).